A 400-amino-acid polypeptide reads, in one-letter code: LIM homeobox transcription factor 1-beta.1 (400 aa).

LIM zinc-binding domains are found at residues 54 to 113 (AVCE…LFAA) and 114 to 175 (KCSG…EKDL). Residues 175–228 (LLSSGSPDDSDSVKSDDEEGDVKPGKGRVNQGKGSDDGKDPRRPKRPRTILTTQ) are disordered. Residues 218–277 (PKRPRTILTTQQRRAFKASFEVSSKPCRKVRETLAAETGLSVRVVQVWFQNQRAKIKKLA) constitute a DNA-binding region (homeobox).

Shows a temporal expression pattern in three main areas: neural, kidney and limbs. From stage 13 onwards, expressed in regions of the nervous system including the placodes and otic vesicles, eye, specific sets of neurons, and in discreet regions of the neural tube. From stage 13, also expressed in the presumptive pronephros, and from stage 27 expression is predominant in the capsule of the pronephric glomus. Also expressed in the developing forelimbs and hindlimbs. In metamorphosing tadpoles, expressed in the eye, brain, muscle and mesonephric kidney.

The protein resides in the nucleus. In terms of biological role, required for early specification of the kidney glomus, lying upstream of wt1 in the pathway controlling glomus differentiation. The balance in levels and expression patterns of binding partners such as lhx1/lim-1 influences differentiation into glomus or tubule derivatives. Involved in specification of serotonergic neurons. The polypeptide is LIM homeobox transcription factor 1-beta.1 (Xenopus laevis (African clawed frog)).